A 237-amino-acid polypeptide reads, in one-letter code: Proteasome subunit beta type-1 (237 aa).

It belongs to the peptidase T1B family. The 26S proteasome consists of a 20S proteasome core and two 19S regulatory subunits. The 20S proteasome core is a barrel-shaped complex made of 28 subunits that are arranged in four stacked rings. The two outer rings are each formed by seven alpha subunits, and the two inner rings are formed by seven beta subunits. The proteolytic activity is exerted by three beta-subunits psmb5, psmb6 and psmb7.

It localises to the cytoplasm. Its subcellular location is the nucleus. Its function is as follows. Non-catalytic component of the 20S core proteasome complex involved in the proteolytic degradation of most intracellular proteins. This complex plays numerous essential roles within the cell by associating with different regulatory particles. Associated with two 19S regulatory particles, forms the 26S proteasome and thus participates in the ATP-dependent degradation of ubiquitinated proteins. The 26S proteasome plays a key role in the maintenance of protein homeostasis by removing misfolded or damaged proteins that could impair cellular functions, and by removing proteins whose functions are no longer required. Associated with the PA200 or PA28, the 20S proteasome mediates ubiquitin-independent protein degradation. The sequence is that of Proteasome subunit beta type-1 from Danio rerio (Zebrafish).